The chain runs to 573 residues: Phosphoenolpyruvate-protein phosphotransferase (573 aa).

The Tele-phosphohistidine intermediate role is filled by His-190. Positions 297 and 333 each coordinate substrate. Positions 432 and 456 each coordinate Mg(2+). 455-456 is a phosphoenolpyruvate binding site; that stretch reads ND. Position 466 (Arg-466) interacts with substrate. The active-site Proton donor is Cys-503.

The protein belongs to the PEP-utilizing enzyme family. As to quaternary structure, homodimer. The cofactor is Mg(2+).

The protein localises to the cytoplasm. It catalyses the reaction L-histidyl-[protein] + phosphoenolpyruvate = N(pros)-phospho-L-histidyl-[protein] + pyruvate. Functionally, general (non sugar-specific) component of the phosphoenolpyruvate-dependent sugar phosphotransferase system (sugar PTS). This major carbohydrate active-transport system catalyzes the phosphorylation of incoming sugar substrates concomitantly with their translocation across the cell membrane. Enzyme I transfers the phosphoryl group from phosphoenolpyruvate (PEP) to the phosphoryl carrier protein (HPr). In Staphylococcus carnosus (strain TM300), this protein is Phosphoenolpyruvate-protein phosphotransferase (ptsI).